Here is a 223-residue protein sequence, read N- to C-terminus: GRF1-interacting factor 3 (223 aa).

A disordered region spans residues 179–223 (ANNAGPNDASGGGKPDGTNMSQSGADGQGGSAARHGGGDAKTEGK). The span at 214–223 (GGGDAKTEGK) shows a compositional bias: basic and acidic residues.

It belongs to the SS18 family. As to quaternary structure, interacts with GRF1. In terms of tissue distribution, predominantly expressed in shoot tips containing the shoot apical meristem (SAM) and flower buds. Also expressed in mature flowers.

In terms of biological role, transcription coactivator that plays a role in the regulation of cell expansion in leaf and cotyledons tissues. Component of a network formed by miR396, the GRFs and their interacting factors (GIFs) acting in the regulation of meristem function, at least partially through the control of cell proliferation. GIFs are involved in the positive regulation of cell proliferation of lateral organs in a functionally redundant manner. This Arabidopsis thaliana (Mouse-ear cress) protein is GRF1-interacting factor 3 (GIF3).